The primary structure comprises 270 residues: L-cystine-binding protein TcyK (270 aa).

Residues 1–20 (MKTKTAFMAILFSLITVLSA) form the signal peptide. Cys21 carries N-palmitoyl cysteine lipidation. Residue Cys21 is the site of S-diacylglycerol cysteine attachment.

This sequence belongs to the bacterial solute-binding protein 3 family. As to quaternary structure, the complex is composed of two ATP-binding proteins (TcyN), two transmembrane proteins (TcyL and TcyM) and two solute-binding proteins (TcyJ and TcyK).

The protein resides in the cell membrane. Part of the ABC transporter complex TcyJKLMN involved in L-cystine import. Is also involved in cystathionine, djenkolate, and S-methylcysteine transport. The sequence is that of L-cystine-binding protein TcyK (tcyK) from Bacillus subtilis (strain 168).